Consider the following 277-residue polypeptide: Pantothenate synthetase (277 aa).

26 to 33 (MGNLHAGH) contacts ATP. The active-site Proton donor is His-33. Gln-57 contributes to the (R)-pantoate binding site. A beta-alanine-binding site is contributed by Gln-57. Residue 143–146 (GEKD) coordinates ATP. Gln-149 contacts (R)-pantoate. ATP contacts are provided by residues Val-172 and 180–183 (LSSR).

It belongs to the pantothenate synthetase family. As to quaternary structure, homodimer.

It is found in the cytoplasm. It catalyses the reaction (R)-pantoate + beta-alanine + ATP = (R)-pantothenate + AMP + diphosphate + H(+). Its pathway is cofactor biosynthesis; (R)-pantothenate biosynthesis; (R)-pantothenate from (R)-pantoate and beta-alanine: step 1/1. Catalyzes the condensation of pantoate with beta-alanine in an ATP-dependent reaction via a pantoyl-adenylate intermediate. The protein is Pantothenate synthetase of Nitrosomonas europaea (strain ATCC 19718 / CIP 103999 / KCTC 2705 / NBRC 14298).